The chain runs to 199 residues: B3 domain-containing protein Os06g0107800 (199 aa).

Residues 13–32 are disordered; it reads QLQGGGGGHGGGGGGGGGER. Residues 15 to 29 are compositionally biased toward gly residues; that stretch reads QGGGGGHGGGGGGGG. Residues 37–141 constitute a DNA-binding region (TF-B3); the sequence is FEKVVTPSDV…RLFIDCRKRA (105 aa).

The protein localises to the nucleus. The sequence is that of B3 domain-containing protein Os06g0107800 from Oryza sativa subsp. japonica (Rice).